Here is a 209-residue protein sequence, read N- to C-terminus: Ribosomal RNA large subunit methyltransferase E (209 aa).

Gly-63, Trp-65, Asp-83, Asp-99, and Asp-124 together coordinate S-adenosyl-L-methionine. The active-site Proton acceptor is Lys-164. The TRAM domain maps to 191–209; sequence EASRGRSREVYIVAMGYMG.

This sequence belongs to the class I-like SAM-binding methyltransferase superfamily. RNA methyltransferase RlmE family.

The protein localises to the cytoplasm. The catalysed reaction is uridine(2552) in 23S rRNA + S-adenosyl-L-methionine = 2'-O-methyluridine(2552) in 23S rRNA + S-adenosyl-L-homocysteine + H(+). Its function is as follows. Specifically methylates the uridine in position 2552 of 23S rRNA at the 2'-O position of the ribose in the fully assembled 50S ribosomal subunit. The chain is Ribosomal RNA large subunit methyltransferase E from Histophilus somni (strain 129Pt) (Haemophilus somnus).